Consider the following 349-residue polypeptide: NADH-quinone oxidoreductase subunit H (349 aa).

8 helical membrane-spanning segments follow: residues 11-31 (FPLL…LLLV), 83-103 (GVFL…WAVI), 116-136 (VGLL…IMGG), 162-182 (IGFV…TTIV), 200-220 (FLDW…ISAL), 252-272 (LFFL…TILF), 288-308 (VPGI…FAMV), and 323-343 (LGWK…AAFL).

It belongs to the complex I subunit 1 family. As to quaternary structure, NDH-1 is composed of 14 different subunits. Subunits NuoA, H, J, K, L, M, N constitute the membrane sector of the complex.

Its subcellular location is the cell inner membrane. The enzyme catalyses a quinone + NADH + 5 H(+)(in) = a quinol + NAD(+) + 4 H(+)(out). Its function is as follows. NDH-1 shuttles electrons from NADH, via FMN and iron-sulfur (Fe-S) centers, to quinones in the respiratory chain. The immediate electron acceptor for the enzyme in this species is believed to be ubiquinone. Couples the redox reaction to proton translocation (for every two electrons transferred, four hydrogen ions are translocated across the cytoplasmic membrane), and thus conserves the redox energy in a proton gradient. This subunit may bind ubiquinone. The polypeptide is NADH-quinone oxidoreductase subunit H (Bartonella henselae (strain ATCC 49882 / DSM 28221 / CCUG 30454 / Houston 1) (Rochalimaea henselae)).